A 214-amino-acid polypeptide reads, in one-letter code: ATP synthase subunit 5, mitochondrial (214 aa).

The N-terminal 24 residues, 1–24 (MFASRAIRMMSMRPMARTMATKAA), are a transit peptide targeting the mitochondrion.

As to quaternary structure, F-type ATP synthases have 2 components, the catalytic core F(1) and the membrane-embedded component F(0), linked together by a central stalk and a peripheral stalk. The central stalk, also called rotor shaft, is often seen as part of F(1). The peripheral stalk is seen as part of F(0). F(0) contains the membrane channel next to the rotor. F-type ATP synthases form dimers but each monomer functions independently in ATP generation. The dimer consists of 17 different polypeptides: ATP1 (subunit alpha, 3 molecules per monomer, part of F(1)), ATP2 (subunit beta, 3 copies per monomer, part of F(1)), ATP3 (subunit gamma, part of the central stalk), ATP4 (subunit b, part of the peripheral stalk), ATP5/OSCP (subunit 5/OSCP, part of the peripheral stalk), ATP6 (subunit a, part of the peripheral stalk), ATP7 (subunit d, part of the peripheral stalk), ATP8 (subunit 8, part of the peripheral stalk), OLI1 (subunit c, part of the rotor, 10 molecules per monomer), ATP14 (subunit h, part of the peripheral stalk), ATP15 (subunit epsilon, part of the central stalk), ATP16 (subunit delta, part of the central stalk), ATP17 (subunit f, part of the peripheral stalk), ATP18 (subunit i/j, part of the peripheral stalk), ATP19 (subunit k, dimer-specific, at interface between monomers), ATP20 (subunit g, at interface between monomers), TIM11 (subunit e, at interface between monomers).

The protein localises to the mitochondrion inner membrane. In terms of biological role, mitochondrial membrane ATP synthase (F(1)F(0) ATP synthase or Complex V) produces ATP from ADP in the presence of a proton gradient across the membrane which is generated by electron transport complexes of the respiratory chain. F-type ATP synthases consist of two structural domains, F(1) - containing the extramembraneous catalytic core, and F(0) - containing the membrane proton channel, linked together by a central stalk and a peripheral stalk. During catalysis, ATP synthesis in the catalytic domain of F(1) is coupled via a rotary mechanism of the central stalk subunits to proton translocation. Part of the complex F(0) domain and the peripheral stalk, which acts as a stator to hold the catalytic alpha/ATP1(3)beta/ATP2(3) subcomplex and subunit a/ATP6 static relative to the rotary elements. This Yarrowia lipolytica (strain CLIB 122 / E 150) (Yeast) protein is ATP synthase subunit 5, mitochondrial.